The sequence spans 336 residues: UDP-3-O-acylglucosamine N-acyltransferase (336 aa).

Residue H237 is the Proton acceptor of the active site.

Belongs to the transferase hexapeptide repeat family. LpxD subfamily. As to quaternary structure, homotrimer.

It carries out the reaction a UDP-3-O-[(3R)-3-hydroxyacyl]-alpha-D-glucosamine + a (3R)-hydroxyacyl-[ACP] = a UDP-2-N,3-O-bis[(3R)-3-hydroxyacyl]-alpha-D-glucosamine + holo-[ACP] + H(+). It functions in the pathway bacterial outer membrane biogenesis; LPS lipid A biosynthesis. Its function is as follows. Catalyzes the N-acylation of UDP-3-O-acylglucosamine using 3-hydroxyacyl-ACP as the acyl donor. Is involved in the biosynthesis of lipid A, a phosphorylated glycolipid that anchors the lipopolysaccharide to the outer membrane of the cell. The sequence is that of UDP-3-O-acylglucosamine N-acyltransferase from Alcanivorax borkumensis (strain ATCC 700651 / DSM 11573 / NCIMB 13689 / SK2).